The following is a 301-amino-acid chain: Cell division control protein 2 homolog 1 (301 aa).

The region spanning 5–297 is the Protein kinase domain; that stretch reads YERLQKIGEG…AAQALEHPYF (293 aa). ATP is bound by residues 11-19 and K34; that span reads IGEGSYGVV. S15 is modified (phosphoserine). Y16 carries the post-translational modification Phosphotyrosine. Catalysis depends on D127, which acts as the Proton acceptor. At T160 the chain carries Phosphothreonine; by CAK.

The protein belongs to the protein kinase superfamily. CMGC Ser/Thr protein kinase family. CDC2/CDKX subfamily. In terms of assembly, forms a stable but non-covalent complex with a regulatory subunit and with a cyclin.

The enzyme catalyses L-seryl-[protein] + ATP = O-phospho-L-seryl-[protein] + ADP + H(+). The catalysed reaction is L-threonyl-[protein] + ATP = O-phospho-L-threonyl-[protein] + ADP + H(+). Its activity is regulated as follows. Phosphorylation at Ser-15 or Tyr-16 inactivates the enzyme, while phosphorylation at Thr-160 activates it. Functionally, probably involved in the control of the cell cycle. This is Cell division control protein 2 homolog 1 (CRK1) from Trypanosoma brucei brucei.